We begin with the raw amino-acid sequence, 181 residues long: Putative ankyrin repeat protein RBE_0150 (181 aa).

ANK repeat units follow at residues 50 to 79 (IGQK…KLGT), 83 to 114 (LGRT…DINA), 118 to 147 (SGST…DYFT), and 151 to 180 (LGQT…AGYY).

The protein is Putative ankyrin repeat protein RBE_0150 of Rickettsia bellii (strain RML369-C).